The sequence spans 283 residues: tRNA dimethylallyltransferase (283 aa).

The interval 5–8 is interaction with substrate tRNA; sequence DSML.

This sequence belongs to the IPP transferase family. As to quaternary structure, monomer. Mg(2+) serves as cofactor.

It carries out the reaction adenosine(37) in tRNA + dimethylallyl diphosphate = N(6)-dimethylallyladenosine(37) in tRNA + diphosphate. Functionally, catalyzes the transfer of a dimethylallyl group onto the adenine at position 37 in tRNAs that read codons beginning with uridine, leading to the formation of N6-(dimethylallyl)adenosine (i(6)A). The polypeptide is tRNA dimethylallyltransferase (Desulforamulus reducens (strain ATCC BAA-1160 / DSM 100696 / MI-1) (Desulfotomaculum reducens)).